Reading from the N-terminus, the 242-residue chain is Ribosomal RNA small subunit methyltransferase G (242 aa).

Residues glycine 78, phenylalanine 83, 129-130 (AE), and arginine 148 each bind S-adenosyl-L-methionine. Positions 221–242 (TKKRYPRKAGVPEKSPIGGKHD) are disordered.

This sequence belongs to the methyltransferase superfamily. RNA methyltransferase RsmG family.

The protein localises to the cytoplasm. Specifically methylates the N7 position of a guanine in 16S rRNA. The sequence is that of Ribosomal RNA small subunit methyltransferase G from Oenococcus oeni (strain ATCC BAA-331 / PSU-1).